The following is a 64-amino-acid chain: Large ribosomal subunit protein uL29 (64 aa).

It belongs to the universal ribosomal protein uL29 family.

This Porphyromonas gingivalis (strain ATCC 33277 / DSM 20709 / CIP 103683 / JCM 12257 / NCTC 11834 / 2561) protein is Large ribosomal subunit protein uL29.